Here is a 155-residue protein sequence, read N- to C-terminus: 6,7-dimethyl-8-ribityllumazine synthase (155 aa).

5-amino-6-(D-ribitylamino)uracil contacts are provided by residues Phe22, 56 to 58 (AFE), and 80 to 82 (AVI). A (2S)-2-hydroxy-3-oxobutyl phosphate-binding site is contributed by 85-86 (NT). Residue His88 is the Proton donor of the active site. Position 113 (Phe113) interacts with 5-amino-6-(D-ribitylamino)uracil. (2S)-2-hydroxy-3-oxobutyl phosphate is bound at residue Arg127.

Belongs to the DMRL synthase family.

It catalyses the reaction (2S)-2-hydroxy-3-oxobutyl phosphate + 5-amino-6-(D-ribitylamino)uracil = 6,7-dimethyl-8-(1-D-ribityl)lumazine + phosphate + 2 H2O + H(+). The protein operates within cofactor biosynthesis; riboflavin biosynthesis; riboflavin from 2-hydroxy-3-oxobutyl phosphate and 5-amino-6-(D-ribitylamino)uracil: step 1/2. Functionally, catalyzes the formation of 6,7-dimethyl-8-ribityllumazine by condensation of 5-amino-6-(D-ribitylamino)uracil with 3,4-dihydroxy-2-butanone 4-phosphate. This is the penultimate step in the biosynthesis of riboflavin. This is 6,7-dimethyl-8-ribityllumazine synthase from Streptococcus pneumoniae serotype 2 (strain D39 / NCTC 7466).